An 87-amino-acid polypeptide reads, in one-letter code: Spore morphogenesis and germination protein YwcE (87 aa).

A run of 3 helical transmembrane segments spans residues 1–21, 26–46, and 56–76; these read MMDM…FIWL, VALS…FYAT, and LMII…FIIY.

This sequence belongs to the YwcE family.

The protein localises to the cell membrane. The protein resides in the spore membrane. Its subcellular location is the spore outer membrane. Required for proper spore morphogenesis. Important for spore germination. The protein is Spore morphogenesis and germination protein YwcE (ywcE) of Bacillus subtilis (strain 168).